The chain runs to 493 residues: D-glyceraldehyde dehydrogenase (NADP(+)) (493 aa).

A coiled-coil region spans residues 70–92; it reads RAKELIEKNRAELENIIMEENGK. NADP(+) contacts are provided by residues 146–149, arginine 157, 172–176, 204–210, 225–248, cysteine 281, and 381–383; these read TPWN, KPSSD, RGSEIGD, GSTATGQRIMQKASANMAKLILEL, and EIF. Substrate-binding residues include asparagine 149 and arginine 157. The Proton acceptor role is filled by glutamate 247. Cysteine 281 provides a ligand contact to substrate. Catalysis depends on cysteine 281, which acts as the Proton donor.

It belongs to the aldehyde dehydrogenase family. Glyceraldehyde dehydrogenase subfamily. As to quaternary structure, homotetramer. Dimer of dimers.

It carries out the reaction D-glyceraldehyde + NADP(+) + H2O = (R)-glycerate + NADPH + 2 H(+). It participates in carbohydrate degradation; glycolysis. With respect to regulation, inhibited by calcium, cadmium, copper and mercury ions. Stable for 2 hours at 60 degrees Celsius but activity is decreased to less than 50 percent within 20 minutes at 80 degrees Celsius. Two folds activity enhancement in the presence of 1 mM glutathione, DTT, or 2-mercaptoethanol. Complete activity inhibition by thiol-modifying reagents such as p-chloromercuribenzoic acid or p-hydroxy-mercuribenzoic acid. Functionally, NADP-dependent dehydrogenase of the nED (non-phosphorylated Entner-Doudoroff) pathway with highest activity towards glyceraldehydes (e.g. D,L-glyceraldehyde and D-glyceraldehyde), to a lesser extent towards D,L-glyceraldehyde-3-phosphate and glycolaldehyde, but no activity towards aliphatic or aromatic aldehydes. In Thermoplasma acidophilum (strain ATCC 25905 / DSM 1728 / JCM 9062 / NBRC 15155 / AMRC-C165), this protein is D-glyceraldehyde dehydrogenase (NADP(+)).